A 715-amino-acid polypeptide reads, in one-letter code: Elongation factor G (715 aa).

The tr-type G domain occupies 12-309 (RRVRNIGIMA…GVIDYLPSPL (298 aa)). Residues 21–28 (AHIDAGKT), 108–112 (DTPGH), and 162–165 (NKMD) each bind GTP.

Belongs to the TRAFAC class translation factor GTPase superfamily. Classic translation factor GTPase family. EF-G/EF-2 subfamily.

It is found in the cytoplasm. Catalyzes the GTP-dependent ribosomal translocation step during translation elongation. During this step, the ribosome changes from the pre-translocational (PRE) to the post-translocational (POST) state as the newly formed A-site-bound peptidyl-tRNA and P-site-bound deacylated tRNA move to the P and E sites, respectively. Catalyzes the coordinated movement of the two tRNA molecules, the mRNA and conformational changes in the ribosome. The protein is Elongation factor G of Rubrobacter xylanophilus (strain DSM 9941 / JCM 11954 / NBRC 16129 / PRD-1).